The chain runs to 293 residues: Small ribosomal subunit biogenesis GTPase RsgA (293 aa).

Positions 63–223 (KNELVRPPIA…VADTPGFSSL (161 aa)) constitute a CP-type G domain. Residues 112-115 (SKMD) and 166-174 (GQSGVGKSS) contribute to the GTP site. The Zn(2+) site is built by C247, C252, H254, and C260.

This sequence belongs to the TRAFAC class YlqF/YawG GTPase family. RsgA subfamily. In terms of assembly, monomer. Associates with 30S ribosomal subunit, binds 16S rRNA. It depends on Zn(2+) as a cofactor.

It localises to the cytoplasm. One of several proteins that assist in the late maturation steps of the functional core of the 30S ribosomal subunit. Helps release RbfA from mature subunits. May play a role in the assembly of ribosomal proteins into the subunit. Circularly permuted GTPase that catalyzes slow GTP hydrolysis, GTPase activity is stimulated by the 30S ribosomal subunit. The protein is Small ribosomal subunit biogenesis GTPase RsgA of Bacillus cereus (strain ATCC 14579 / DSM 31 / CCUG 7414 / JCM 2152 / NBRC 15305 / NCIMB 9373 / NCTC 2599 / NRRL B-3711).